A 923-amino-acid chain; its full sequence is Protein translocase subunit SecA (923 aa).

ATP-binding positions include Gln86, Gly104–Thr108, and Asp512. Zn(2+) contacts are provided by Cys906, Cys908, Cys917, and His918.

Belongs to the SecA family. In terms of assembly, monomer and homodimer. Part of the essential Sec protein translocation apparatus which comprises SecA, SecYEG and auxiliary proteins SecDF-YajC and YidC. Requires Zn(2+) as cofactor.

It is found in the cell inner membrane. Its subcellular location is the cytoplasm. The enzyme catalyses ATP + H2O + cellular proteinSide 1 = ADP + phosphate + cellular proteinSide 2.. Functionally, part of the Sec protein translocase complex. Interacts with the SecYEG preprotein conducting channel. Has a central role in coupling the hydrolysis of ATP to the transfer of proteins into and across the cell membrane, serving both as a receptor for the preprotein-SecB complex and as an ATP-driven molecular motor driving the stepwise translocation of polypeptide chains across the membrane. The chain is Protein translocase subunit SecA from Caulobacter vibrioides (strain ATCC 19089 / CIP 103742 / CB 15) (Caulobacter crescentus).